A 334-amino-acid chain; its full sequence is Syntaxin-18 (334 aa).

Residues 1–308 lie on the Cytoplasmic side of the membrane; it reads MAVDITLLFR…EDIREAIKNN (308 aa). 2 disordered regions span residues 29–50 and 166–225; these read GGADGSRDELFRRSPRPKGDFS and LSKL…GEDE. Basic and acidic residues-rich tracts occupy residues 33 to 50, 166 to 186, and 193 to 207; these read GSRDELFRRSPRPKGDFS, LSKLEPEPHTKRKEPASEKSS, and SEEKPAAEDLPEKPL. One can recognise a t-SNARE coiled-coil homology domain in the interval 242 to 304; the sequence is IGEMNSLFDE…KEGNEDIREA (63 aa). A helical; Anchor for type IV membrane protein transmembrane segment spans residues 309 to 329; that stretch reads AGFRVWILFFLVMCSFSLLFL. The Vesicular portion of the chain corresponds to 330–334; it reads DWYDS.

This sequence belongs to the syntaxin family. In terms of assembly, component of a SNARE complex consisting of STX18, USE1L, BNIP1/SEC20L, and SEC22B. RINT1/TIP20L and ZW10 are associated with the complex through interaction with BNIP1/SEC20L. Interacts directly with USE1L and BNIP1/SEC20L.

The protein resides in the endoplasmic reticulum membrane. The protein localises to the golgi apparatus membrane. In terms of biological role, syntaxin that may be involved in targeting and fusion of Golgi-derived retrograde transport vesicles with the ER. This Rattus norvegicus (Rat) protein is Syntaxin-18 (Stx18).